The chain runs to 176 residues: NAD(P)H-quinone oxidoreductase subunit J (176 aa).

The protein belongs to the complex I 30 kDa subunit family. NDH-1 can be composed of about 15 different subunits; different subcomplexes with different compositions have been identified which probably have different functions.

It is found in the cellular thylakoid membrane. The enzyme catalyses a plastoquinone + NADH + (n+1) H(+)(in) = a plastoquinol + NAD(+) + n H(+)(out). It carries out the reaction a plastoquinone + NADPH + (n+1) H(+)(in) = a plastoquinol + NADP(+) + n H(+)(out). NDH-1 shuttles electrons from an unknown electron donor, via FMN and iron-sulfur (Fe-S) centers, to quinones in the respiratory and/or the photosynthetic chain. The immediate electron acceptor for the enzyme in this species is believed to be plastoquinone. Couples the redox reaction to proton translocation, and thus conserves the redox energy in a proton gradient. Cyanobacterial NDH-1 also plays a role in inorganic carbon-concentration. In Prochlorococcus marinus subsp. pastoris (strain CCMP1986 / NIES-2087 / MED4), this protein is NAD(P)H-quinone oxidoreductase subunit J.